A 99-amino-acid polypeptide reads, in one-letter code: A-type ATP synthase subunit F (99 aa).

The protein belongs to the V-ATPase F subunit family. As to quaternary structure, has multiple subunits with at least A(3), B(3), C, D, E, F, H, I and proteolipid K(x).

The protein resides in the cell membrane. Component of the A-type ATP synthase that produces ATP from ADP in the presence of a proton gradient across the membrane. The chain is A-type ATP synthase subunit F from Methanococcoides burtonii (strain DSM 6242 / NBRC 107633 / OCM 468 / ACE-M).